The following is a 407-amino-acid chain: Argininosuccinate synthase (407 aa).

10–18 (AYSGGLDTS) serves as a coordination point for ATP. 2 residues coordinate L-citrulline: Y88 and S93. Residue G118 participates in ATP binding. L-aspartate contacts are provided by T120, N124, and D125. Residue N124 participates in L-citrulline binding. R128, S177, S186, E263, and Y275 together coordinate L-citrulline.

Belongs to the argininosuccinate synthase family. Type 1 subfamily. In terms of assembly, homotetramer.

The protein localises to the cytoplasm. It catalyses the reaction L-citrulline + L-aspartate + ATP = 2-(N(omega)-L-arginino)succinate + AMP + diphosphate + H(+). It functions in the pathway amino-acid biosynthesis; L-arginine biosynthesis; L-arginine from L-ornithine and carbamoyl phosphate: step 2/3. This is Argininosuccinate synthase from Clostridium botulinum (strain Eklund 17B / Type B).